The chain runs to 419 residues: Tryptophan synthase beta chain (419 aa).

K86 is subject to N6-(pyridoxal phosphate)lysine. Positions 394–403 are enriched in basic and acidic residues; the sequence is VEQQKVEQQK. A disordered region spans residues 394–419; it reads VEQQKVEQQKADNQNTEKNNQESGNE. The span at 404–419 shows a compositional bias: polar residues; that stretch reads ADNQNTEKNNQESGNE.

Belongs to the TrpB family. In terms of assembly, tetramer of two alpha and two beta chains. Pyridoxal 5'-phosphate is required as a cofactor.

The enzyme catalyses (1S,2R)-1-C-(indol-3-yl)glycerol 3-phosphate + L-serine = D-glyceraldehyde 3-phosphate + L-tryptophan + H2O. Its pathway is amino-acid biosynthesis; L-tryptophan biosynthesis; L-tryptophan from chorismate: step 5/5. In terms of biological role, the beta subunit is responsible for the synthesis of L-tryptophan from indole and L-serine. This chain is Tryptophan synthase beta chain, found in Shewanella halifaxensis (strain HAW-EB4).